A 709-amino-acid polypeptide reads, in one-letter code: Dibasic-processing endoprotease (709 aa).

A signal peptide spans 1–22 (MHPALLCGPILAIFLQFLVSSC). Propeptides lie at residues 23–82 (SPLE…IRKR) and 83–102 (GIDA…RYKR). Over 103-668 (DASESDELLN…QPVLEPSYRE (566 aa)) the chain is Lumenal. Residues 128 to 440 (QWHIFNSNNP…FGKLDASKFV (313 aa)) form the Peptidase S8 domain. N-linked (GlcNAc...) asparagine glycosylation is present at Asn-155. Active-site charge relay system residues include Asp-162 and His-200. 2 disulfide bridges follow: Cys-216–Cys-363 and Cys-308–Cys-338. Residue Ser-371 is the Charge relay system of the active site. The region spanning 449–588 (VNPQTWLIAP…QLALWGESEN (140 aa)) is the P/Homo B domain. N-linked (GlcNAc...) asparagine glycosylation is found at Asn-463, Asn-471, and Asn-620. Residues 669–693 (IVAFITFFLLFAFIFVAVIWTWISA) traverse the membrane as a helical segment. The Cytoplasmic portion of the chain corresponds to 694–709 (FWKAKAPPPLSQQEIA).

It belongs to the peptidase S8 family. Furin subfamily. Ca(2+) is required as a cofactor. Post-translationally, N-glycosylated.

Its subcellular location is the golgi apparatus. It localises to the trans-Golgi network membrane. Its function is as follows. Membrane-bound, subtilisin-like serine protease that processes the P-factor precursor and other precursor proteins. Essential for cell viability. Cleaves substrate on the C-terminal side of dibasic residues. The chain is Dibasic-processing endoprotease (krp1) from Schizosaccharomyces pombe (strain 972 / ATCC 24843) (Fission yeast).